The sequence spans 316 residues: HTH-type transcriptional regulator cbl (316 aa).

The 59-residue stretch at 1–59 folds into the HTH lysR-type domain; it reads MNFQQLKIIREAARQDYNLTEVANMLYTSQSGVSRHIRELEEELGIEIFIRRGKRLLGM. The H-T-H motif DNA-binding region spans 19 to 38; that stretch reads LTEVANMLYTSQSGVSRHIR.

Belongs to the LysR transcriptional regulatory family.

Its function is as follows. May be an accessory regulatory protein within the cys regulon. The sequence is that of HTH-type transcriptional regulator cbl (cbl) from Klebsiella aerogenes (Enterobacter aerogenes).